A 232-amino-acid chain; its full sequence is U2 small nuclear ribonucleoprotein B'' (232 aa).

The RRM 1 domain maps to 10–89 (QTVYLRNLNE…KRMRVQYAKT (80 aa)). Positions 90–159 (RSDCLATEDG…QEPPAPPNNI (70 aa)) are disordered. The span at 108-123 (KKQEEKAAEKKRRAEE) shows a compositional bias: basic and acidic residues. A compositionally biased stretch (polar residues) spans 127-151 (SGPNAAAQSNGTGYQASRLGKTSQE). One can recognise an RRM 2 domain in the interval 158 to 232 (NILFIQNLPA…NPMAISYAKK (75 aa)).

The protein belongs to the RRM U1 A/B'' family. In terms of assembly, component of the spliceosome where it is associated with snRNP U2.

Its subcellular location is the nucleus. The protein resides in the cajal body. The protein localises to the nucleoplasm. It localises to the cytoplasm. Functionally, involved in nuclear pre-mRNA splicing. The polypeptide is U2 small nuclear ribonucleoprotein B'' (Oryza sativa subsp. japonica (Rice)).